We begin with the raw amino-acid sequence, 655 residues long: p-hydroxybenzoic acid efflux pump subunit AaeB (655 aa).

At 1-12 the chain is on the periplasmic side; that stretch reads MDIFSIANQHIR. Residues 13-33 form a helical membrane-spanning segment; it reads FAVKLATAIVLALFVGFHFQL. Over 34-37 the chain is Cytoplasmic; the sequence is ETPR. Residues 38 to 58 form a helical membrane-spanning segment; the sequence is WAVLTAAIVAAGPAFAAGGEP. Topologically, residues 59–68 are periplasmic; sequence YSGAIRYRGF. Residues 69–89 traverse the membrane as a helical segment; it reads LRIIGTFIGCIAGLVIIIAMI. Residues 90–92 are Cytoplasmic-facing; the sequence is RAP. Residues 93 to 113 form a helical membrane-spanning segment; sequence LLMILVCCIWAGFCTWISSLV. Residues 114-120 are Periplasmic-facing; that stretch reads RIENSYA. The helical transmembrane segment at 121–141 threads the bilayer; sequence WGLAGYTALIIVITIQPEPLL. Residues 142 to 151 lie on the Cytoplasmic side of the membrane; sequence TPQFAVERCS. The helical transmembrane segment at 152 to 172 threads the bilayer; that stretch reads EIVIGIVCAIMADLLFSPRSI. Residues 173–369 are Periplasmic-facing; sequence KQEVDRELES…RTTLSCILGT (197 aa). Residues 370–390 traverse the membrane as a helical segment; the sequence is LFWLWTGWTSGSGAMVMIAVV. At 391 to 406 the chain is on the cytoplasmic side; that stretch reads TSLAMRLPNPRMVAID. A helical membrane pass occupies residues 407–427; sequence FIYGTLAALPLGLLYFLVIIP. Topologically, residues 428–430 are periplasmic; sequence NTQ. A helical transmembrane segment spans residues 431 to 451; that stretch reads QSMLLLCISLAVLGFFLGIEV. Topologically, residues 452–458 are cytoplasmic; the sequence is QKRRLGS. Residues 459–479 traverse the membrane as a helical segment; that stretch reads MGALASTINIIVLDNPMTFHF. Topologically, residues 480-481 are periplasmic; sequence SQ. The chain crosses the membrane as a helical span at residues 482-502; that stretch reads FLDSALGQIVGCVLAFTVILL. Over 503–655 the chain is Cytoplasmic; sequence VRDKSRDRTG…HKYQHALTDS (153 aa).

It belongs to the aromatic acid exporter ArAE (TC 2.A.85) family.

The protein resides in the cell inner membrane. Forms an efflux pump with AaeA. Could function as a metabolic relief valve, allowing to eliminate certain compounds when they accumulate to high levels in the cell. This Escherichia coli O157:H7 protein is p-hydroxybenzoic acid efflux pump subunit AaeB.